A 691-amino-acid chain; its full sequence is Choline transporter-like 1 (691 aa).

Positions 1–10 (MGCAESKDGE) are enriched in basic and acidic residues. Positions 1-20 (MGCAESKDGEGEAQNNRPKY) are disordered. Helical transmembrane passes span 28-48 (WLAI…FSFV), 205-225 (WHII…LVTM), and 232-252 (IVSW…TVAL). N-linked (GlcNAc...) asparagine glycosylation occurs at Asn-261. Helical transmembrane passes span 282–302 (VLTL…VIYF) and 332–352 (LLAF…IICL). N-linked (GlcNAc...) asparagine glycosylation is present at Asn-385. 4 helical membrane-spanning segments follow: residues 408-428 (SMFW…FACQ), 527-547 (VVAI…NAMA), 562-582 (FILF…GIVL), and 591-611 (FYMA…HIIL).

It belongs to the CTL (choline transporter-like) family.

It localises to the membrane. This is Choline transporter-like 1 from Drosophila melanogaster (Fruit fly).